Reading from the N-terminus, the 214-residue chain is Ras-related protein RABH1c (214 aa).

Residue 16 to 23 (GDQSVGKT) participates in GTP binding. Positions 38-46 (YQPTIGIDF) match the Effector region motif. GTP contacts are provided by residues 64–68 (DTAGQ), 123–126 (NKTD), and 153–154 (SA). The segment at 194–214 (TSNSSQGEQQGGAGGGGGCSC) is disordered. Gly residues predominate over residues 202–214 (QQGGAGGGGGCSC). 2 S-geranylgeranyl cysteine lipidation sites follow: C212 and C214. A Cysteine methyl ester modification is found at C214.

Belongs to the small GTPase superfamily. Rab family. In terms of assembly, interacts with the C-terminus of GC5, but not with GC3.

The protein resides in the golgi apparatus membrane. It is found in the cytoplasm. The protein localises to the cytosol. Protein transport. Regulator of membrane traffic from the Golgi apparatus towards the endoplasmic reticulum (ER). The protein is Ras-related protein RABH1c (RABH1C) of Arabidopsis thaliana (Mouse-ear cress).